The primary structure comprises 227 residues: Iron-regulated surface determinant protein C (227 aa).

Residues Met1–Ala28 form the signal peptide. Residues Ala29–Gly150 enclose the NEAT domain. Heme-binding residues include Ser47, Ile48, Tyr132, and Tyr136. The disordered stretch occupies residues Ala149–Gln191. Low complexity predominate over residues Ser161–Ala172. Residues Thr173–Ser182 show a composition bias toward polar residues. The NPQTN sorting signal motif lies at Asn189–Asn193. Thr192 carries the pentaglycyl murein peptidoglycan amidated threonine modification. Residues Asn193 to Glu227 constitute a propeptide, removed by sortase B.

It belongs to the IsdC family. Monomer. Interacts with IsdA.

It localises to the secreted. The protein localises to the cell wall. In terms of biological role, involved in heme (porphyrin) scavenging. Binds hemoglobin and almost exclusively free-base protoporphyrin IX. Probably has a role as the central conduit of the isd heme uptake system, i.e. mediates the transfer of the iron-containing nutrient from IsdABH to the membrane translocation system IsdDEF. Hemin-free IsdC (apo-IsdC) acquires hemin from hemin-containing IsdA (holo-IsdA) probably through the activated holo-IsdA-apo-IsdC complex and due to the higher affinity of apo-IsdC for the cofactor. The reaction is reversible. In Staphylococcus aureus (strain MRSA252), this protein is Iron-regulated surface determinant protein C (isdC).